The chain runs to 54 residues: Metallothionein-2 (54 aa).

It belongs to the metallothionein superfamily. Type 11 family.

The sequence is that of Metallothionein-2 (MTP2) from Yarrowia lipolytica (strain CLIB 122 / E 150) (Yeast).